We begin with the raw amino-acid sequence, 37 residues long: Omega-sparatoxin-Hv1a (37 aa).

Disulfide bonds link cysteine 4-cysteine 18, cysteine 11-cysteine 23, and cysteine 17-cysteine 33.

In terms of tissue distribution, expressed by the venom gland.

It localises to the secreted. Its function is as follows. Blocks calcium channels (Cav). This chain is Omega-sparatoxin-Hv1a, found in Heteropoda venatoria (Brown huntsman spider).